We begin with the raw amino-acid sequence, 253 residues long: 28 kDa inner dynein arm light chain, axonemal (253 aa).

Residues 19–44 form a disordered region; the sequence is TSKDKGKGAKGTPGKKGALPPVEQKP. Residues 160–239 adopt a coiled-coil conformation; that stretch reads IRKALQTEQG…LKQQLETFLV (80 aa).

Belongs to the inner dynein arm light chain family.

It localises to the cytoplasm. The protein resides in the cytoskeleton. The protein localises to the flagellum axoneme. Functionally, plays a dynamic role in flagellar motility. May be necessary for stable assembly of a subset of inner dynein arms or for the binding of these arms to the outer doublet microtubules of the axoneme. This chain is 28 kDa inner dynein arm light chain, axonemal (IDA4), found in Chlamydomonas reinhardtii (Chlamydomonas smithii).